We begin with the raw amino-acid sequence, 500 residues long: L-arabinose isomerase (500 aa).

Residues Glu-306, Glu-333, His-350, and His-450 each coordinate Mn(2+).

It belongs to the arabinose isomerase family. Homohexamer. It depends on Mn(2+) as a cofactor.

The enzyme catalyses beta-L-arabinopyranose = L-ribulose. It functions in the pathway carbohydrate degradation; L-arabinose degradation via L-ribulose; D-xylulose 5-phosphate from L-arabinose (bacterial route): step 1/3. Functionally, catalyzes the conversion of L-arabinose to L-ribulose. The polypeptide is L-arabinose isomerase (Salmonella paratyphi A (strain ATCC 9150 / SARB42)).